Consider the following 173-residue polypeptide: Putative C-type lectin protein FPV198 (173 aa).

Residues 50 to 169 (GMSGWVQINN…CNKKHTGICF (120 aa)) enclose the C-type lectin domain.

The protein is Putative C-type lectin protein FPV198 of Vertebrata (FPV).